The primary structure comprises 215 residues: Octanoyltransferase (215 aa).

In terms of domain architecture, BPL/LPL catalytic spans 42–215 (QNTPDEIWLL…AEKLKARLKQ (174 aa)). Substrate is bound by residues 81–88 (RGGQITYH), 148–150 (ALG), and 161–163 (GLA). Cys179 (acyl-thioester intermediate) is an active-site residue.

It belongs to the LipB family.

The protein localises to the cytoplasm. It carries out the reaction octanoyl-[ACP] + L-lysyl-[protein] = N(6)-octanoyl-L-lysyl-[protein] + holo-[ACP] + H(+). It participates in protein modification; protein lipoylation via endogenous pathway; protein N(6)-(lipoyl)lysine from octanoyl-[acyl-carrier-protein]: step 1/2. In terms of biological role, catalyzes the transfer of endogenously produced octanoic acid from octanoyl-acyl-carrier-protein onto the lipoyl domains of lipoate-dependent enzymes. Lipoyl-ACP can also act as a substrate although octanoyl-ACP is likely to be the physiological substrate. This Nitrosospira multiformis (strain ATCC 25196 / NCIMB 11849 / C 71) protein is Octanoyltransferase.